The primary structure comprises 106 residues: MVNIPKTRNTYCKGKECRKHTQHKVTQYKAGKASLYAQGKRRYDRKQSGYGGQTKQIFHKKAKTTKKVVLRLECVKCKVKMQLALKRCKHFELGGDKKQKGQALQF.

This sequence belongs to the eukaryotic ribosomal protein eL42 family.

The sequence is that of Large ribosomal subunit protein eL42 (RPL44) from Yarrowia lipolytica (strain CLIB 122 / E 150) (Yeast).